Reading from the N-terminus, the 456-residue chain is tRNA modification GTPase MnmE (456 aa).

Arg23, Glu85, and Arg124 together coordinate (6S)-5-formyl-5,6,7,8-tetrahydrofolate. A TrmE-type G domain is found at 220–375 (GLRVLIFGKP…LVSAIQERFV (156 aa)). Asn230 provides a ligand contact to K(+). Residues 230–235 (NVGKSS), 249–255 (TDIPGTT), and 274–277 (DTAG) contribute to the GTP site. Position 234 (Ser234) interacts with Mg(2+). Positions 249, 251, and 254 each coordinate K(+). Thr255 contributes to the Mg(2+) binding site. Lys456 lines the (6S)-5-formyl-5,6,7,8-tetrahydrofolate pocket.

This sequence belongs to the TRAFAC class TrmE-Era-EngA-EngB-Septin-like GTPase superfamily. TrmE GTPase family. In terms of assembly, homodimer. Heterotetramer of two MnmE and two MnmG subunits. K(+) is required as a cofactor.

The protein localises to the cytoplasm. Its function is as follows. Exhibits a very high intrinsic GTPase hydrolysis rate. Involved in the addition of a carboxymethylaminomethyl (cmnm) group at the wobble position (U34) of certain tRNAs, forming tRNA-cmnm(5)s(2)U34. The chain is tRNA modification GTPase MnmE from Syntrophotalea carbinolica (strain DSM 2380 / NBRC 103641 / GraBd1) (Pelobacter carbinolicus).